Reading from the N-terminus, the 258-residue chain is Small ribosomal subunit protein uS3 (258 aa).

The KH type-2 domain occupies 16–85 (IDEYLEKELE…NPQVEVKEVD (70 aa)). The segment at 198-258 (RVTETPAEEA…KDADGEESEK (61 aa)) is disordered. The span at 203-245 (PAEEASEASEVVEDLEEVEDLEEIEDLEEVEDLEEVEDLEDTE) shows a compositional bias: acidic residues.

It belongs to the universal ribosomal protein uS3 family. As to quaternary structure, part of the 30S ribosomal subunit.

Functionally, binds the lower part of the 30S subunit head. In Methanothermobacter thermautotrophicus (strain ATCC 29096 / DSM 1053 / JCM 10044 / NBRC 100330 / Delta H) (Methanobacterium thermoautotrophicum), this protein is Small ribosomal subunit protein uS3.